A 56-amino-acid chain; its full sequence is Bdellin B-3 (56 aa).

Residues 1-42 enclose the Kazal-like domain; that stretch reads DTECVCTKELHRVCGSDGVTYDNECLATCHGASVAHDHACEG. Intrachain disulfides connect cysteine 4-cysteine 29, cysteine 6-cysteine 25, and cysteine 14-cysteine 40.

Proteinase inhibitor. Blocks the activity of trypsin, plasmin and sperm acrosin. This chain is Bdellin B-3, found in Hirudo medicinalis (Medicinal leech).